Here is a 283-residue protein sequence, read N- to C-terminus: 4-diphosphocytidyl-2-C-methyl-D-erythritol kinase (283 aa).

Lys-10 is an active-site residue. Residue 99–109 (PMGGGLGGGSS) participates in ATP binding. Asp-141 is an active-site residue.

The protein belongs to the GHMP kinase family. IspE subfamily. In terms of assembly, homodimer.

It catalyses the reaction 4-CDP-2-C-methyl-D-erythritol + ATP = 4-CDP-2-C-methyl-D-erythritol 2-phosphate + ADP + H(+). It functions in the pathway isoprenoid biosynthesis; isopentenyl diphosphate biosynthesis via DXP pathway; isopentenyl diphosphate from 1-deoxy-D-xylulose 5-phosphate: step 3/6. Functionally, catalyzes the phosphorylation of the position 2 hydroxy group of 4-diphosphocytidyl-2C-methyl-D-erythritol. In Escherichia coli O157:H7 (strain EC4115 / EHEC), this protein is 4-diphosphocytidyl-2-C-methyl-D-erythritol kinase.